The sequence spans 322 residues: Transaldolase (322 aa).

K136 acts as the Schiff-base intermediate with substrate in catalysis.

This sequence belongs to the transaldolase family. Type 1 subfamily. Homodimer.

The protein resides in the cytoplasm. It catalyses the reaction D-sedoheptulose 7-phosphate + D-glyceraldehyde 3-phosphate = D-erythrose 4-phosphate + beta-D-fructose 6-phosphate. It participates in carbohydrate degradation; pentose phosphate pathway; D-glyceraldehyde 3-phosphate and beta-D-fructose 6-phosphate from D-ribose 5-phosphate and D-xylulose 5-phosphate (non-oxidative stage): step 2/3. Its function is as follows. Transaldolase is important for the balance of metabolites in the pentose-phosphate pathway. This is Transaldolase from Xanthomonas euvesicatoria pv. vesicatoria (strain 85-10) (Xanthomonas campestris pv. vesicatoria).